We begin with the raw amino-acid sequence, 362 residues long: 3-dehydroquinate synthase (362 aa).

Residues 72–77 (SGEQAK), 106–110 (GVVGD), 130–131 (TT), K142, and K151 contribute to the NAD(+) site. Residues E184, H246, and H263 each contribute to the Zn(2+) site.

The protein belongs to the sugar phosphate cyclases superfamily. Dehydroquinate synthase family. NAD(+) is required as a cofactor. Co(2+) serves as cofactor. It depends on Zn(2+) as a cofactor.

The protein resides in the cytoplasm. The catalysed reaction is 7-phospho-2-dehydro-3-deoxy-D-arabino-heptonate = 3-dehydroquinate + phosphate. It participates in metabolic intermediate biosynthesis; chorismate biosynthesis; chorismate from D-erythrose 4-phosphate and phosphoenolpyruvate: step 2/7. Functionally, catalyzes the conversion of 3-deoxy-D-arabino-heptulosonate 7-phosphate (DAHP) to dehydroquinate (DHQ). The polypeptide is 3-dehydroquinate synthase (Bacillus subtilis (strain 168)).